The primary structure comprises 420 residues: MAP kinase-interacting serine/threonine-protein kinase 1 (420 aa).

The interval 1–25 (MGSSEPIPIAESDKRKKKKRKARAT) is disordered. Position 27 is a phosphoserine; by PAK2 (Ser27). One can recognise a Protein kinase domain in the interval 37-321 (KLTSELLGEG…AAQVLQHPWV (285 aa)). ATP contacts are provided by residues 43 to 51 (LGEGANAKV) and Lys66. Asp158 acts as the Proton acceptor in catalysis. 2 positions are modified to phosphoserine: Ser168 and Ser173. A phosphothreonine mark is found at Thr197, Thr202, and Thr332. Residues 386–420 (LSPPSKSRLARRRALAQAGRSGDAPPSPTPTTPAP) form a disordered region. The segment covering 400–409 (LAQAGRSGDA) has biased composition (low complexity). Residues 410–420 (PPSPTPTTPAP) are compositionally biased toward pro residues.

This sequence belongs to the protein kinase superfamily. CAMK Ser/Thr protein kinase family. Interacts with the C-terminal regions of EIF4G1 and EIF4G2. Also binds to dephosphorylated ERK1 and ERK2, and to the p38 kinases. The cofactor is Mg(2+). Dual phosphorylation of Thr-197 and Thr-202 activates the kinase. Phosphorylation of Thr-332 activates the kinase. MAPK3/ERK1 is one of the kinases which activate MKNK1/MNK1. Phosphorylation by PAK2 leads to a reduced phosphorylation of EIF4G1.

The catalysed reaction is L-seryl-[protein] + ATP = O-phospho-L-seryl-[protein] + ADP + H(+). The enzyme catalyses L-threonyl-[protein] + ATP = O-phospho-L-threonyl-[protein] + ADP + H(+). Phosphorylated and activated by the p38 kinases and kinases in the Erk pathway. In terms of biological role, may play a role in the response to environmental stress and cytokines. Appears to regulate translation by phosphorylating EIF4E, thus increasing the affinity of this protein for the 7-methylguanosine-containing mRNA cap. In Bos taurus (Bovine), this protein is MAP kinase-interacting serine/threonine-protein kinase 1 (MKNK1).